Consider the following 495-residue polypeptide: Muscle LIM protein Mlp84B (495 aa).

Residues 12 to 63 (CPRCGKSVYAAEERLAGGYVFHKNCFKCGMCNKSLDSTNCTEHERELYCKTC) form the LIM zinc-binding 1 domain. The short motif at 66-71 (RKFGPK) is the Nuclear localization signal element. In terms of domain architecture, LIM zinc-binding 2 spans 120-172 (CPRCGGYVYAAEQMLARGRSWHKECFKCGTCKKGLDSILCCEAPDKNIYCKGC). Positions 175–180 (KKFGPK) match the Nuclear localization signal motif. LIM zinc-binding domains follow at residues 222–274 (CPRC…CRTC), 325–377 (CPRC…CRAC), and 421–473 (CPRC…CRAC).

As to expression, in the embryo, expression is restricted to the somatic, visceral, and pharyngeal muscles. Within the somatic musculature, expression is localized at the ends of muscles fibers at the point of attachment to the epidermis (at protein level). There is no expression in cardiac mesoderm or in fat body.

Its subcellular location is the cytoplasm. It localises to the nucleus. In terms of biological role, plays a role in cell differentiation late in myogenesis. Transcription factor Mef2 is essential for expression. The protein is Muscle LIM protein Mlp84B of Drosophila melanogaster (Fruit fly).